A 62-amino-acid polypeptide reads, in one-letter code: Endoregulin (62 aa).

Residues 25-45 (LAVIILFITAVLLLILFAIVF) traverse the membrane as a helical segment.

As to quaternary structure, homooligomer. Can also form heterooligomers with other sarcoplasmic/endoplasmic reticulum calcium ATPase (SERCA) regulators ARLN, PLN, SLN and STRIT1/DWORF. Monomer. Interacts as a monomer with ATP2A2/SERCA2; the interaction results in inhibition of ATP2A2 Ca(2+) affinity.

Its subcellular location is the endoplasmic reticulum membrane. Functionally, inhibits the activity of the calcium ATPases ATP2A2/SERCA2 and ATP2A3/SERCA3 by decreasing their apparent affinity for Ca(2+). This chain is Endoregulin, found in Homo sapiens (Human).